Reading from the N-terminus, the 239-residue chain is Octanoyl-[acyl-carrier-protein]:protein N-octanoyltransferase LIPT2, mitochondrial (239 aa).

A mitochondrion-targeting transit peptide spans 1–18 (MSVPVLRVRRLGLVGYAE). The region spanning 37-217 (GSPGGALLLC…AFEEEFQCQL (181 aa)) is the BPL/LPL catalytic domain. Residues 81–88 (RGGLITFH), 147–149 (AIG), and 160–162 (GLA) contribute to the substrate site. Cys-178 functions as the Acyl-thioester intermediate in the catalytic mechanism. The disordered stretch occupies residues 220-239 (EQNPEQNPVQNRPDRDAGPL).

It belongs to the LipB family.

The protein localises to the mitochondrion. It carries out the reaction octanoyl-[ACP] + L-lysyl-[protein] = N(6)-octanoyl-L-lysyl-[protein] + holo-[ACP] + H(+). The protein operates within protein modification; protein lipoylation via endogenous pathway; protein N(6)-(lipoyl)lysine from octanoyl-[acyl-carrier-protein]: step 1/2. Functionally, catalyzes the transfer of endogenously produced octanoic acid from octanoyl-acyl-carrier-protein (octanoyl-ACP) onto the lipoyl domains of lipoate-dependent enzymes such as the protein H of the glycine cleavage system (GCSH). Lipoyl-ACP can also act as a substrate although octanoyl-ACP is likely to be the physiological substrate. The sequence is that of Octanoyl-[acyl-carrier-protein]:protein N-octanoyltransferase LIPT2, mitochondrial (lipt2) from Xenopus tropicalis (Western clawed frog).